A 452-amino-acid chain; its full sequence is Pup--protein ligase (452 aa).

Mg(2+) is bound at residue glutamate 9. Arginine 53 serves as a coordination point for ATP. Residue tyrosine 55 coordinates Mg(2+). The Proton acceptor role is filled by aspartate 57. Glutamate 63 is a binding site for Mg(2+). ATP contacts are provided by threonine 66 and tryptophan 419.

This sequence belongs to the Pup ligase/Pup deamidase family. Pup-conjugating enzyme subfamily.

The catalysed reaction is ATP + [prokaryotic ubiquitin-like protein]-L-glutamate + [protein]-L-lysine = ADP + phosphate + N(6)-([prokaryotic ubiquitin-like protein]-gamma-L-glutamyl)-[protein]-L-lysine.. Its pathway is protein degradation; proteasomal Pup-dependent pathway. The protein operates within protein modification; protein pupylation. Functionally, catalyzes the covalent attachment of the prokaryotic ubiquitin-like protein modifier Pup to the proteasomal substrate proteins, thereby targeting them for proteasomal degradation. This tagging system is termed pupylation. The ligation reaction involves the side-chain carboxylate of the C-terminal glutamate of Pup and the side-chain amino group of a substrate lysine. The sequence is that of Pup--protein ligase from Mycobacteroides abscessus (strain ATCC 19977 / DSM 44196 / CCUG 20993 / CIP 104536 / JCM 13569 / NCTC 13031 / TMC 1543 / L948) (Mycobacterium abscessus).